The primary structure comprises 282 residues: Aldo-keto reductase MUL_1987 (282 aa).

Tyr-57 (proton donor) is an active-site residue. 6 residues coordinate NADPH: Leu-197, Ile-235, Ser-238, Thr-246, Asn-247, and Arg-273.

This sequence belongs to the aldo/keto reductase family.

The protein is Aldo-keto reductase MUL_1987 of Mycobacterium ulcerans (strain Agy99).